Consider the following 89-residue polypeptide: Small ribosomal subunit protein uS15 (89 aa).

This sequence belongs to the universal ribosomal protein uS15 family. Part of the 30S ribosomal subunit. Forms a bridge to the 50S subunit in the 70S ribosome, contacting the 23S rRNA.

One of the primary rRNA binding proteins, it binds directly to 16S rRNA where it helps nucleate assembly of the platform of the 30S subunit by binding and bridging several RNA helices of the 16S rRNA. Functionally, forms an intersubunit bridge (bridge B4) with the 23S rRNA of the 50S subunit in the ribosome. The sequence is that of Small ribosomal subunit protein uS15 from Nostoc punctiforme (strain ATCC 29133 / PCC 73102).